A 343-amino-acid chain; its full sequence is Ribosomal RNA small subunit methyltransferase C (343 aa).

The protein belongs to the methyltransferase superfamily. RsmC family. In terms of assembly, monomer.

The protein localises to the cytoplasm. The enzyme catalyses guanosine(1207) in 16S rRNA + S-adenosyl-L-methionine = N(2)-methylguanosine(1207) in 16S rRNA + S-adenosyl-L-homocysteine + H(+). Its function is as follows. Specifically methylates the guanine in position 1207 of 16S rRNA in the 30S particle. The chain is Ribosomal RNA small subunit methyltransferase C from Shigella boydii serotype 4 (strain Sb227).